The primary structure comprises 288 residues: ATP synthase gamma chain (288 aa).

Belongs to the ATPase gamma chain family. As to quaternary structure, F-type ATPases have 2 components, CF(1) - the catalytic core - and CF(0) - the membrane proton channel. CF(1) has five subunits: alpha(3), beta(3), gamma(1), delta(1), epsilon(1). CF(0) has three main subunits: a, b and c.

Its subcellular location is the cell inner membrane. In terms of biological role, produces ATP from ADP in the presence of a proton gradient across the membrane. The gamma chain is believed to be important in regulating ATPase activity and the flow of protons through the CF(0) complex. The protein is ATP synthase gamma chain of Aliivibrio fischeri (strain ATCC 700601 / ES114) (Vibrio fischeri).